The sequence spans 494 residues: uncharacterized protein (494 aa).

In terms of domain architecture, 2Fe-2S ferredoxin-type spans 4-82 (FTITVKKTEG…NMIIEPLEGF (79 aa)). Positions 46, 51, 54, and 66 each coordinate [2Fe-2S] cluster. 4Fe-4S ferredoxin-type domains lie at 127–157 (DLKD…NYPG) and 178–208 (EKEA…IVHN). [4Fe-4S] cluster contacts are provided by Cys137, Cys140, Cys143, Cys147, Cys189, Cys192, Cys195, and Cys199.

The protein belongs to the succinate dehydrogenase/fumarate reductase iron-sulfur protein family.

This is an uncharacterized protein from Methanococcus maripaludis (strain DSM 14266 / JCM 13030 / NBRC 101832 / S2 / LL).